The chain runs to 620 residues: Dihydroxy-acid dehydratase (620 aa).

Asp-82 is a Mg(2+) binding site. Cys-123 provides a ligand contact to [2Fe-2S] cluster. Residues Asp-124 and Lys-125 each contribute to the Mg(2+) site. Lys-125 is subject to N6-carboxylysine. [2Fe-2S] cluster is bound at residue Cys-197. Position 493 (Glu-493) interacts with Mg(2+). The Proton acceptor role is filled by Ser-519.

This sequence belongs to the IlvD/Edd family. As to quaternary structure, homodimer. It depends on [2Fe-2S] cluster as a cofactor. Requires Mg(2+) as cofactor.

The enzyme catalyses (2R)-2,3-dihydroxy-3-methylbutanoate = 3-methyl-2-oxobutanoate + H2O. It carries out the reaction (2R,3R)-2,3-dihydroxy-3-methylpentanoate = (S)-3-methyl-2-oxopentanoate + H2O. Its pathway is amino-acid biosynthesis; L-isoleucine biosynthesis; L-isoleucine from 2-oxobutanoate: step 3/4. The protein operates within amino-acid biosynthesis; L-valine biosynthesis; L-valine from pyruvate: step 3/4. In terms of biological role, functions in the biosynthesis of branched-chain amino acids. Catalyzes the dehydration of (2R,3R)-2,3-dihydroxy-3-methylpentanoate (2,3-dihydroxy-3-methylvalerate) into 2-oxo-3-methylpentanoate (2-oxo-3-methylvalerate) and of (2R)-2,3-dihydroxy-3-methylbutanoate (2,3-dihydroxyisovalerate) into 2-oxo-3-methylbutanoate (2-oxoisovalerate), the penultimate precursor to L-isoleucine and L-valine, respectively. The polypeptide is Dihydroxy-acid dehydratase (Bifidobacterium longum subsp. infantis (strain ATCC 15697 / DSM 20088 / JCM 1222 / NCTC 11817 / S12)).